A 201-amino-acid chain; its full sequence is Lipoprotein signal peptidase (201 aa).

A run of 2 helical transmembrane segments spans residues serine 73 to isoleucine 93 and threonine 97 to aspartate 117. Residues aspartate 126 and aspartate 144 contribute to the active site. The helical transmembrane segment at tyrosine 135–isoleucine 155 threads the bilayer.

The protein belongs to the peptidase A8 family.

It is found in the cell inner membrane. The catalysed reaction is Release of signal peptides from bacterial membrane prolipoproteins. Hydrolyzes -Xaa-Yaa-Zaa-|-(S,diacylglyceryl)Cys-, in which Xaa is hydrophobic (preferably Leu), and Yaa (Ala or Ser) and Zaa (Gly or Ala) have small, neutral side chains.. It functions in the pathway protein modification; lipoprotein biosynthesis (signal peptide cleavage). This protein specifically catalyzes the removal of signal peptides from prolipoproteins. The sequence is that of Lipoprotein signal peptidase from Rickettsia africae (strain ESF-5).